We begin with the raw amino-acid sequence, 852 residues long: Beta-galactosidase 8 (852 aa).

A signal peptide spans 1–29 (MEIAAKMVKVRKMEMILLLILVIVVAATA). N-linked (GlcNAc...) asparagine glycosylation is present at asparagine 31. Residue glutamate 188 is the Proton donor of the active site. Glutamate 257 (nucleophile) is an active-site residue. 4 N-linked (GlcNAc...) asparagine glycosylation sites follow: asparagine 258, asparagine 475, asparagine 766, and asparagine 807. An SUEL-type lectin domain is found at 766-852 (NRTRPVLSLK…KSLAVEASCS (87 aa)).

Belongs to the glycosyl hydrolase 35 family. In terms of tissue distribution, expressed in roots, flowers and siliques.

It localises to the secreted. The protein resides in the extracellular space. Its subcellular location is the apoplast. The enzyme catalyses Hydrolysis of terminal non-reducing beta-D-galactose residues in beta-D-galactosides.. The chain is Beta-galactosidase 8 (BGAL8) from Arabidopsis thaliana (Mouse-ear cress).